The primary structure comprises 315 residues: DNA-directed RNA polymerase subunit alpha (315 aa).

The interval Met-1–Thr-228 is alpha N-terminal domain (alpha-NTD). The segment at Asp-246–Glu-315 is alpha C-terminal domain (alpha-CTD).

This sequence belongs to the RNA polymerase alpha chain family. As to quaternary structure, homodimer. The RNAP catalytic core consists of 2 alpha, 1 beta, 1 beta' and 1 omega subunit. When a sigma factor is associated with the core the holoenzyme is formed, which can initiate transcription.

The enzyme catalyses RNA(n) + a ribonucleoside 5'-triphosphate = RNA(n+1) + diphosphate. Its function is as follows. DNA-dependent RNA polymerase catalyzes the transcription of DNA into RNA using the four ribonucleoside triphosphates as substrates. The protein is DNA-directed RNA polymerase subunit alpha of Desulforamulus reducens (strain ATCC BAA-1160 / DSM 100696 / MI-1) (Desulfotomaculum reducens).